The following is an 83-amino-acid chain: Beta-defensin 119 (83 aa).

The signal sequence occupies residues 1–20 (MKFLFLFLAILLAMEPVVSG). Disulfide bonds link Cys-27–Cys-54, Cys-34–Cys-48, and Cys-38–Cys-55.

Belongs to the beta-defensin family.

The protein resides in the secreted. Functionally, has antibacterial activity. This Bos taurus (Bovine) protein is Beta-defensin 119 (DEFB119).